The primary structure comprises 326 residues: MSGLVPTAPEQPTEEMENQIKSPTAVPDAPPDYNSHFAPGPAGPVASPSAGLPMGYYIPQQPGAIPLYHPTGGTHPIQYQPGKYPVTNQPAPIMWMAGPAPVPNCPPGLEYLAQLDNIHVLQHVEPLELMTRFETNNRYDIKNNIDQMVYIVTEDTDDFTRNAYRNLRPFVLRVTDCLGREIMTMQRPFRCTCCCFCCPCARQELEVQCPPGVTIGFVAEHWNLCRASYSIQNEKKESMMRVRGPCATYGCGSDSVFEINSLDGVSNIGSIIRKWNGFLSTMVNADHFEIRFPLALDVKMKAMIFGSCFLIDFMYFERPPPRRMSR.

The tract at residues 1–32 (MSGLVPTAPEQPTEEMENQIKSPTAVPDAPPD) is disordered. The tract at residues 1 to 94 (MSGLVPTAPE…PVTNQPAPIM (94 aa)) is proline-rich domain (PRD). Topologically, residues 1-299 (MSGLVPTAPE…IRFPLALDVK (299 aa)) are cytoplasmic. The SH3-binding 1 motif lies at 18–25 (NQIKSPTA). The PPxY motif signature appears at 30–33 (PPDY). The SH3-binding 2 motif lies at 41–49 (PAGPVASPS). Phosphotyrosine; by ABL is present on residues Y79 and Y84. The SH3-binding 3 motif lies at 94–102 (MWMAGPAPV). 5 S-palmitoyl cysteine lipidation sites follow: C193, C194, C195, C197, and C198. Residues 300–316 (MKAMIFGSCFLIDFMYF) form a helical membrane-spanning segment. Topologically, residues 317-326 (ERPPPRRMSR) are extracellular.

The protein belongs to the phospholipid scramblase family. In terms of assembly, interacts with PDCD6. Interacts with KPNA2; this interaction mediates the nucleus import of PLSCR4. It depends on Ca(2+) as a cofactor. The cofactor is Mg(2+). Requires Zn(2+) as cofactor.

The protein resides in the cell membrane. It localises to the nucleus. The catalysed reaction is a 1,2-diacyl-sn-glycero-3-phosphocholine(in) = a 1,2-diacyl-sn-glycero-3-phosphocholine(out). The enzyme catalyses a 1,2-diacyl-sn-glycero-3-phospho-L-serine(in) = a 1,2-diacyl-sn-glycero-3-phospho-L-serine(out). In terms of biological role, catalyzes metal ion-induced ATP-independent rapid bidirectional and non-specific movement of phospholipids (lipid scrambling or lipid flip-flop) between the inner and outer leaflet of the plasma membrane and participates in the redistribution of phospholipids between membrane leaflets. Metal ions bind to the calcium-binding site and induce conformation change in the protein. Has a greater affi nity for Ca(2+) than Mg(2+) and Zn(2+). The chain is Phospholipid scramblase 4 from Mus musculus (Mouse).